A 323-amino-acid chain; its full sequence is tRNA U34 carboxymethyltransferase (323 aa).

Residues Lys-93, Trp-107, Lys-112, Gly-132, 154–156 (DPS), 182–183 (VE), Met-197, Tyr-201, and Arg-316 contribute to the carboxy-S-adenosyl-L-methionine site.

This sequence belongs to the class I-like SAM-binding methyltransferase superfamily. CmoB family. As to quaternary structure, homotetramer.

It carries out the reaction carboxy-S-adenosyl-L-methionine + 5-hydroxyuridine(34) in tRNA = 5-carboxymethoxyuridine(34) in tRNA + S-adenosyl-L-homocysteine + H(+). Catalyzes carboxymethyl transfer from carboxy-S-adenosyl-L-methionine (Cx-SAM) to 5-hydroxyuridine (ho5U) to form 5-carboxymethoxyuridine (cmo5U) at position 34 in tRNAs. The protein is tRNA U34 carboxymethyltransferase of Pseudoalteromonas atlantica (strain T6c / ATCC BAA-1087).